The chain runs to 218 residues: Leucine-rich repeat protein 1 (218 aa).

The signal sequence occupies residues 1 to 27 (MASRNYRWELFAASLTLTLALIHLVEA). LRR repeat units lie at residues 94–117 (EHLQYLELYKNNIQGTIPSELGNL), 119–140 (NLISLDLYNNNLTGIVPTSLGK), 141–165 (LKSLVFLRLNDNRLTGPIPRALTAI), and 167–190 (SLKVVDVSSNDLCGTIPTNGPFAH).

In terms of assembly, interacts with HIR1.

In terms of biological role, involved in plant defense response. The sequence is that of Leucine-rich repeat protein 1 from Arabidopsis thaliana (Mouse-ear cress).